We begin with the raw amino-acid sequence, 47 residues long: Large ribosomal subunit protein eL40 (47 aa).

Belongs to the eukaryotic ribosomal protein eL40 family.

In Methanococcus vannielii (strain ATCC 35089 / DSM 1224 / JCM 13029 / OCM 148 / SB), this protein is Large ribosomal subunit protein eL40.